We begin with the raw amino-acid sequence, 245 residues long: Biosynthetic peptidoglycan transglycosylase (245 aa).

A helical transmembrane segment spans residues 20–42 (VYAGSVFAGAWLATQLFYLVQIA).

It belongs to the glycosyltransferase 51 family.

The protein resides in the cell inner membrane. The catalysed reaction is [GlcNAc-(1-&gt;4)-Mur2Ac(oyl-L-Ala-gamma-D-Glu-L-Lys-D-Ala-D-Ala)](n)-di-trans,octa-cis-undecaprenyl diphosphate + beta-D-GlcNAc-(1-&gt;4)-Mur2Ac(oyl-L-Ala-gamma-D-Glu-L-Lys-D-Ala-D-Ala)-di-trans,octa-cis-undecaprenyl diphosphate = [GlcNAc-(1-&gt;4)-Mur2Ac(oyl-L-Ala-gamma-D-Glu-L-Lys-D-Ala-D-Ala)](n+1)-di-trans,octa-cis-undecaprenyl diphosphate + di-trans,octa-cis-undecaprenyl diphosphate + H(+). It participates in cell wall biogenesis; peptidoglycan biosynthesis. Functionally, peptidoglycan polymerase that catalyzes glycan chain elongation from lipid-linked precursors. This chain is Biosynthetic peptidoglycan transglycosylase, found in Burkholderia ambifaria (strain ATCC BAA-244 / DSM 16087 / CCUG 44356 / LMG 19182 / AMMD) (Burkholderia cepacia (strain AMMD)).